Here is a 410-residue protein sequence, read N- to C-terminus: Mitochondrial potassium channel (410 aa).

A mitochondrion-targeting transit peptide spans 1–35; that stretch reads MTGCSPVFTMQQVVGVSHRLVWRTFRGTDLLMTRT. The Mitochondrial matrix portion of the chain corresponds to 36 to 201; the sequence is LCSPGPSRPG…KERTRAERTK (166 aa). Positions 116 to 143 form a coiled coil; it reads VREAREDLEAQQTKLKEVRDRLDRVSRE. A helical transmembrane segment spans residues 202–222; the sequence is NWSLIGSVLGALIGVAGSTYV. Over 223 to 385 the chain is Mitochondrial intermembrane; the sequence is NRVRLQELKA…RLEAQANRNA (163 aa). The interval 276-296 is disordered; that stretch reads GQDQGSGSPTGPSSPRGKDID. Residues 280–290 are compositionally biased toward low complexity; it reads GSGSPTGPSSP. A helical membrane pass occupies residues 386–406; sequence ISSTLVTCVTFMATLPLLYML. The Mitochondrial matrix portion of the chain corresponds to 407-410; sequence FKTS.

The mitochondrial potassium channel (mitoK(ATP)) forms a heteromultimer.

The protein resides in the mitochondrion inner membrane. It carries out the reaction K(+)(in) = K(+)(out). With respect to regulation, channel activity inhibited by ATP via ABCB8/MITOSUR subunit. Functionally, pore-forming subunit of the mitochondrial ATP-gated potassium channel (mitoK(ATP)). Together with ATP-binding subunit ABCB8/MITOSUR of the mitoK(ATP) channel, mediates ATP-dependent K(+) currents across the mitochondrial inner membrane. An increase in ATP intracellular levels closes the channel, inhibiting K(+) transport, whereas a decrease in ATP levels enhances K(+) uptake in the mitochondrial matrix. May contribute to the homeostatic control of cellular metabolism under stress conditions by regulating the mitochondrial matrix volume. The polypeptide is Mitochondrial potassium channel (Rattus norvegicus (Rat)).